Reading from the N-terminus, the 238-residue chain is Ribosomal RNA large subunit methyltransferase E (238 aa).

Positions 76, 78, 99, 115, and 139 each coordinate S-adenosyl-L-methionine. Catalysis depends on K179, which acts as the Proton acceptor.

This sequence belongs to the class I-like SAM-binding methyltransferase superfamily. RNA methyltransferase RlmE family.

It is found in the cytoplasm. It catalyses the reaction uridine(2552) in 23S rRNA + S-adenosyl-L-methionine = 2'-O-methyluridine(2552) in 23S rRNA + S-adenosyl-L-homocysteine + H(+). In terms of biological role, specifically methylates the uridine in position 2552 of 23S rRNA at the 2'-O position of the ribose in the fully assembled 50S ribosomal subunit. The protein is Ribosomal RNA large subunit methyltransferase E of Rhodopseudomonas palustris (strain BisB18).